Consider the following 388-residue polypeptide: uncharacterized protein (388 aa).

[4Fe-4S] cluster contacts are provided by Cys-18, Cys-24, Cys-27, and Cys-99. The S-adenosyl-L-methionine site is built by Gln-212, Glu-262, and Asn-313. The active-site Nucleophile is Cys-343.

The protein belongs to the class I-like SAM-binding methyltransferase superfamily. RNA M5U methyltransferase family.

This is an uncharacterized protein from Bdellovibrio bacteriovorus (strain ATCC 15356 / DSM 50701 / NCIMB 9529 / HD100).